The chain runs to 227 residues: Probable septum site-determining protein MinC (227 aa).

This sequence belongs to the MinC family. In terms of assembly, interacts with MinD and FtsZ.

Its function is as follows. Cell division inhibitor that blocks the formation of polar Z ring septums. Rapidly oscillates between the poles of the cell to destabilize FtsZ filaments that have formed before they mature into polar Z rings. Prevents FtsZ polymerization. This Shouchella clausii (strain KSM-K16) (Alkalihalobacillus clausii) protein is Probable septum site-determining protein MinC.